The sequence spans 511 residues: Probable mannosyl-oligosaccharide alpha-1,2-mannosidase 1B (511 aa).

The first 18 residues, methionine 1–alanine 18, serve as a signal peptide directing secretion. N-linked (GlcNAc...) asparagine glycosylation is found at asparagine 90 and asparagine 177. A disulfide bridge links cysteine 327 with cysteine 356. The Proton donor role is filled by glutamate 370. An N-linked (GlcNAc...) asparagine glycan is attached at asparagine 433. Threonine 501 lines the Ca(2+) pocket.

It belongs to the glycosyl hydrolase 47 family. Monomer. Ca(2+) serves as cofactor. Requires Mg(2+) as cofactor.

It is found in the cytoplasmic vesicle lumen. It carries out the reaction N(4)-(alpha-D-Man-(1-&gt;2)-alpha-D-Man-(1-&gt;2)-alpha-D-Man-(1-&gt;3)-[alpha-D-Man-(1-&gt;2)-alpha-D-Man-(1-&gt;3)-[alpha-D-Man-(1-&gt;2)-alpha-D-Man-(1-&gt;6)]-alpha-D-Man-(1-&gt;6)]-beta-D-Man-(1-&gt;4)-beta-D-GlcNAc-(1-&gt;4)-beta-D-GlcNAc)-L-asparaginyl-[protein] (N-glucan mannose isomer 9A1,2,3B1,2,3) + 4 H2O = N(4)-(alpha-D-Man-(1-&gt;3)-[alpha-D-Man-(1-&gt;3)-[alpha-D-Man-(1-&gt;6)]-alpha-D-Man-(1-&gt;6)]-beta-D-Man-(1-&gt;4)-beta-D-GlcNAc-(1-&gt;4)-beta-D-GlcNAc)-L-asparaginyl-[protein] (N-glucan mannose isomer 5A1,2) + 4 beta-D-mannose. The enzyme catalyses N(4)-(alpha-D-Man-(1-&gt;2)-alpha-D-Man-(1-&gt;2)-alpha-D-Man-(1-&gt;3)-[alpha-D-Man-(1-&gt;3)-[alpha-D-Man-(1-&gt;2)-alpha-D-Man-(1-&gt;6)]-alpha-D-Man-(1-&gt;6)]-beta-D-Man-(1-&gt;4)-beta-D-GlcNAc-(1-&gt;4)-beta-D-GlcNAc)-L-asparaginyl-[protein] (N-glucan mannose isomer 8A1,2,3B1,3) + 3 H2O = N(4)-(alpha-D-Man-(1-&gt;3)-[alpha-D-Man-(1-&gt;3)-[alpha-D-Man-(1-&gt;6)]-alpha-D-Man-(1-&gt;6)]-beta-D-Man-(1-&gt;4)-beta-D-GlcNAc-(1-&gt;4)-beta-D-GlcNAc)-L-asparaginyl-[protein] (N-glucan mannose isomer 5A1,2) + 3 beta-D-mannose. Its pathway is protein modification; protein glycosylation. Involved in the maturation of Asn-linked oligosaccharides. Progressively trims alpha-1,2-linked mannose residues from Man(9)GlcNAc(2) to produce Man(5)GlcNAc(2). This is Probable mannosyl-oligosaccharide alpha-1,2-mannosidase 1B (mns1B) from Aspergillus clavatus (strain ATCC 1007 / CBS 513.65 / DSM 816 / NCTC 3887 / NRRL 1 / QM 1276 / 107).